Consider the following 329-residue polypeptide: Ketol-acid reductoisomerase (NADP(+)) (329 aa).

The 181-residue stretch at 2–182 folds into the KARI N-terminal Rossmann domain; sequence TQLFYDTDAD…GGTRAGILET (181 aa). NADP(+) contacts are provided by residues 25–28, serine 51, serine 53, and 83–86; these read YGSQ and DEFQ. Histidine 108 is a catalytic residue. Residue glycine 134 participates in NADP(+) binding. Positions 183 to 328 constitute a KARI C-terminal knotted domain; it reads NFKEETETDL…KGLRAMFSWL (146 aa). Residues aspartate 191, glutamate 195, glutamate 227, and glutamate 231 each contribute to the Mg(2+) site. Serine 252 provides a ligand contact to substrate.

This sequence belongs to the ketol-acid reductoisomerase family. The cofactor is Mg(2+).

The enzyme catalyses (2R)-2,3-dihydroxy-3-methylbutanoate + NADP(+) = (2S)-2-acetolactate + NADPH + H(+). It catalyses the reaction (2R,3R)-2,3-dihydroxy-3-methylpentanoate + NADP(+) = (S)-2-ethyl-2-hydroxy-3-oxobutanoate + NADPH + H(+). It participates in amino-acid biosynthesis; L-isoleucine biosynthesis; L-isoleucine from 2-oxobutanoate: step 2/4. It functions in the pathway amino-acid biosynthesis; L-valine biosynthesis; L-valine from pyruvate: step 2/4. Functionally, involved in the biosynthesis of branched-chain amino acids (BCAA). Catalyzes an alkyl-migration followed by a ketol-acid reduction of (S)-2-acetolactate (S2AL) to yield (R)-2,3-dihydroxy-isovalerate. In the isomerase reaction, S2AL is rearranged via a Mg-dependent methyl migration to produce 3-hydroxy-3-methyl-2-ketobutyrate (HMKB). In the reductase reaction, this 2-ketoacid undergoes a metal-dependent reduction by NADPH to yield (R)-2,3-dihydroxy-isovalerate. The protein is Ketol-acid reductoisomerase (NADP(+)) of Prochlorococcus marinus subsp. pastoris (strain CCMP1986 / NIES-2087 / MED4).